Consider the following 228-residue polypeptide: ATP synthase F(0) complex subunit a (228 aa).

5 consecutive transmembrane segments (helical) span residues 13-33, 69-89, 98-118, 139-159, and 194-214; these read NILAIPLMTISLLMLTIIFPM, WALILTSLMTLLLTSNLLGLL, QLSMNLGFALPMWLATLLIGL, IPTLILIESISLMIRPLALGV, and ILLFLLTILEMAVAMIQALVF.

Belongs to the ATPase A chain family. In terms of assembly, component of the ATP synthase complex composed at least of ATP5F1A/subunit alpha, ATP5F1B/subunit beta, ATP5MC1/subunit c (homooctomer), MT-ATP6/subunit a, MT-ATP8/subunit 8, ATP5ME/subunit e, ATP5MF/subunit f, ATP5MG/subunit g, ATP5MK/subunit k, ATP5MJ/subunit j, ATP5F1C/subunit gamma, ATP5F1D/subunit delta, ATP5F1E/subunit epsilon, ATP5PF/subunit F6, ATP5PB/subunit b, ATP5PD/subunit d, ATP5PO/subunit OSCP. ATP synthase complex consists of a soluble F(1) head domain (subunits alpha(3) and beta(3)) - the catalytic core - and a membrane F(0) domain - the membrane proton channel (subunits c, a, 8, e, f, g, k and j). These two domains are linked by a central stalk (subunits gamma, delta, and epsilon) rotating inside the F1 region and a stationary peripheral stalk (subunits F6, b, d, and OSCP). Interacts with DNAJC30; interaction is direct.

It is found in the mitochondrion inner membrane. The enzyme catalyses H(+)(in) = H(+)(out). Subunit a, of the mitochondrial membrane ATP synthase complex (F(1)F(0) ATP synthase or Complex V) that produces ATP from ADP in the presence of a proton gradient across the membrane which is generated by electron transport complexes of the respiratory chain. ATP synthase complex consist of a soluble F(1) head domain - the catalytic core - and a membrane F(1) domain - the membrane proton channel. These two domains are linked by a central stalk rotating inside the F(1) region and a stationary peripheral stalk. During catalysis, ATP synthesis in the catalytic domain of F(1) is coupled via a rotary mechanism of the central stalk subunits to proton translocation. With the subunit c (ATP5MC1), forms the proton-conducting channel in the F(0) domain, that contains two crucial half-channels (inlet and outlet) that facilitate proton movement from the mitochondrial intermembrane space (IMS) into the matrix. Protons are taken up via the inlet half-channel and released through the outlet half-channel, following a Grotthuss mechanism. The sequence is that of ATP synthase F(0) complex subunit a from Pelomedusa subrufa (African side-necked turtle).